The primary structure comprises 467 residues: MRLPREIGPIHFVGIGGIGMSGIAEVLCNLGYTVQGSDASESANVARLREKGIAISVGHKAENVAGADVVVVSTAIKRDNPELLAARAQRIPVVRRAEMLAELMRLKSCVAIAGTHGKTTTTSMVAALLDAGEFDPTVINGGIINAYGTNARLGAGEWMVVEADESDGTFLKLPADVAIVTNVDPEHLDHFKTFEAVQNAFRDFVENVPFYGFAVMCIDHPVVQALVGKIEDRRIITYGENPQADVRLLDLKPNGGASTFKVAFRDRKANTAHEIADLKLPMPGRHNALNATAAIAVAHELGLSDDTIRKALAGFGGVRRRFTKTGDWNGVSIIDDYGHHPVEIAAVLKAARESTKTKVIAVVQPHRFTRLQSLFEEFCTCFNDADAVIVAEVYPAGEAPIPGIDRDNFVLGLRAHGHREVIPLQESAALAGVVHSIAKPGDYVVLLGAGNITQWAYALPGELKALG.

Residue 114-120 (GTHGKTT) participates in ATP binding.

Belongs to the MurCDEF family.

The protein localises to the cytoplasm. It carries out the reaction UDP-N-acetyl-alpha-D-muramate + L-alanine + ATP = UDP-N-acetyl-alpha-D-muramoyl-L-alanine + ADP + phosphate + H(+). The protein operates within cell wall biogenesis; peptidoglycan biosynthesis. Its function is as follows. Cell wall formation. The chain is UDP-N-acetylmuramate--L-alanine ligase from Rhodopseudomonas palustris (strain BisA53).